Consider the following 299-residue polypeptide: NAD-dependent protein deacetylase 1 (299 aa).

The region spanning 15–292 is the Deacetylase sirtuin-type domain; the sequence is LPPGTTDLAP…TTVADRLGLR (278 aa). NAD(+)-binding positions include 39–59 and 117–120; these read GAGI…GSLS and QNVD. The active-site Proton acceptor is the His-135. Residues Cys-143, Cys-146, Cys-194, and Cys-197 each coordinate Zn(2+). Residues 234–236 and Leu-278 each bind NAD(+); that span reads GSS.

The protein belongs to the sirtuin family. Class II subfamily. It depends on Zn(2+) as a cofactor.

The protein resides in the cytoplasm. It carries out the reaction N(6)-acetyl-L-lysyl-[protein] + NAD(+) + H2O = 2''-O-acetyl-ADP-D-ribose + nicotinamide + L-lysyl-[protein]. Functionally, NAD-dependent protein deacetylase which modulates the activities of several enzymes which are inactive in their acetylated form. This Streptomyces coelicolor (strain ATCC BAA-471 / A3(2) / M145) protein is NAD-dependent protein deacetylase 1.